Here is a 185-residue protein sequence, read N- to C-terminus: MLNDVYAAQKDGCEKAIASLKRDFTTLRTGKVNISILDHVMIDYYGSMTPLNQVATVLASDASTISITPWEKSMIKTISGAIQAANIGVNPNSDGECVKLFFPPMTIEQRQENAKHAKAMGEKAKVSVRNVRKDANDEVKKLEKDKAITEDESKKGQDEVQKITDGYVAKIDALVKEKEAELLKV.

Positions A135 to E159 are disordered.

It belongs to the RRF family.

Its subcellular location is the cytoplasm. Its function is as follows. Responsible for the release of ribosomes from messenger RNA at the termination of protein biosynthesis. May increase the efficiency of translation by recycling ribosomes from one round of translation to another. The polypeptide is Ribosome-recycling factor (Campylobacter curvus (strain 525.92)).